Here is a 493-residue protein sequence, read N- to C-terminus: Lysine--tRNA ligase (493 aa).

Mg(2+)-binding residues include Glu-402 and Glu-409.

Belongs to the class-II aminoacyl-tRNA synthetase family. As to quaternary structure, homodimer. Mg(2+) serves as cofactor.

It is found in the cytoplasm. It carries out the reaction tRNA(Lys) + L-lysine + ATP = L-lysyl-tRNA(Lys) + AMP + diphosphate. The protein is Lysine--tRNA ligase of Fusobacterium nucleatum subsp. nucleatum (strain ATCC 25586 / DSM 15643 / BCRC 10681 / CIP 101130 / JCM 8532 / KCTC 2640 / LMG 13131 / VPI 4355).